Here is a 423-residue protein sequence, read N- to C-terminus: Kynureninase (423 aa).

Pyridoxal 5'-phosphate is bound by residues Leu105, Ser106, 133-136 (FPSD), Asp218, His221, and Tyr243. Lys244 is subject to N6-(pyridoxal phosphate)lysine. Positions 273 and 301 each coordinate pyridoxal 5'-phosphate.

The protein belongs to the kynureninase family. In terms of assembly, homodimer. Pyridoxal 5'-phosphate is required as a cofactor.

The catalysed reaction is L-kynurenine + H2O = anthranilate + L-alanine + H(+). It carries out the reaction 3-hydroxy-L-kynurenine + H2O = 3-hydroxyanthranilate + L-alanine + H(+). The protein operates within amino-acid degradation; L-kynurenine degradation; L-alanine and anthranilate from L-kynurenine: step 1/1. It participates in cofactor biosynthesis; NAD(+) biosynthesis; quinolinate from L-kynurenine: step 2/3. Catalyzes the cleavage of L-kynurenine (L-Kyn) and L-3-hydroxykynurenine (L-3OHKyn) into anthranilic acid (AA) and 3-hydroxyanthranilic acid (3-OHAA), respectively. In Xanthomonas axonopodis pv. citri (strain 306), this protein is Kynureninase.